A 206-amino-acid chain; its full sequence is Small ribosomal subunit protein uS4 (206 aa).

An S4 RNA-binding domain is found at 96–156; the sequence is GRLDNVVYRM…EKAKKQSRVK (61 aa).

This sequence belongs to the universal ribosomal protein uS4 family. As to quaternary structure, part of the 30S ribosomal subunit. Contacts protein S5. The interaction surface between S4 and S5 is involved in control of translational fidelity.

One of the primary rRNA binding proteins, it binds directly to 16S rRNA where it nucleates assembly of the body of the 30S subunit. Its function is as follows. With S5 and S12 plays an important role in translational accuracy. This is Small ribosomal subunit protein uS4 from Salmonella typhi.